The chain runs to 79 residues: Sec-independent protein translocase protein TatA (79 aa).

A helical transmembrane segment spans residues 1–21; the sequence is MGGFTSIWHWVIVLLVIVLLF. Residues 46 to 79 form a disordered region; the sequence is DDEEEAKNEPKTLDAQATQTKVHETSEIKSKQES. Positions 66–79 are enriched in basic and acidic residues; it reads KVHETSEIKSKQES.

Belongs to the TatA/E family. As to quaternary structure, the Tat system comprises two distinct complexes: a TatABC complex, containing multiple copies of TatA, TatB and TatC subunits, and a separate TatA complex, containing only TatA subunits. Substrates initially bind to the TatABC complex, which probably triggers association of the separate TatA complex to form the active translocon.

Its subcellular location is the cell inner membrane. In terms of biological role, part of the twin-arginine translocation (Tat) system that transports large folded proteins containing a characteristic twin-arginine motif in their signal peptide across membranes. TatA could form the protein-conducting channel of the Tat system. This Helicobacter pylori (strain HPAG1) protein is Sec-independent protein translocase protein TatA.